We begin with the raw amino-acid sequence, 294 residues long: Ribosomal RNA small subunit methyltransferase H (294 aa).

S-adenosyl-L-methionine-binding positions include Gly37–His39, Asp58, Leu93, Asp105, and Gln112.

It belongs to the methyltransferase superfamily. RsmH family.

It localises to the cytoplasm. It carries out the reaction cytidine(1402) in 16S rRNA + S-adenosyl-L-methionine = N(4)-methylcytidine(1402) in 16S rRNA + S-adenosyl-L-homocysteine + H(+). In terms of biological role, specifically methylates the N4 position of cytidine in position 1402 (C1402) of 16S rRNA. This Fervidobacterium nodosum (strain ATCC 35602 / DSM 5306 / Rt17-B1) protein is Ribosomal RNA small subunit methyltransferase H.